Consider the following 106-residue polypeptide: Large ribosomal subunit protein bL21 (106 aa).

The protein belongs to the bacterial ribosomal protein bL21 family. As to quaternary structure, part of the 50S ribosomal subunit. Contacts protein L20.

This protein binds to 23S rRNA in the presence of protein L20. In Streptomyces coelicolor (strain ATCC BAA-471 / A3(2) / M145), this protein is Large ribosomal subunit protein bL21.